Consider the following 709-residue polypeptide: MSKQVFEMIFAGKKLVVETGQVAKQANGSVVVRYGDSTVLTAAVMSKKMSTGDFFPLQVNYEEKMYAAGKFPGGFNKREGRPSTDATLTARLIDRPIRPMFAEGFRNEVQVINTVLSFDENASAPMAAMFGSSLALSISDIPFNGPIAGVQVAYVDGNFIINPTAQEQEASALELTVAGTKEAINMVESGAKELSEEIMLEALLKGHEAVCELIAFQEEIVTAIGKEKAEVELLQVDPELQAEIIATHNIALQAAVQVEEKKAREAATEAVKEVVIGEYEARYAEHEEYDRIMRDVAEILEQMEHAEVRRLITEDKIRPDGRRVDEIRPLDAEIDFLPQVHGSGLFTRGQTQALSVLTLAPMGEAQIIDGLTPEYKKRFMHHYNFPQYSVGETGRYGAAGRREIGHGALGERALEQVLPSLEEFPYAIRLVAEVLESNGSSSQASICAGTLALMAGGVPIKAPVAGIAMGLISDGTNYTVLTDIQGLEDHFGDMDFKVAGTREGITALQMDIKIEGITPQILEEALAQAKKARFEILDVLHGAIAEPRPQLAPTAPKIDMIKIDVDKIKVVIGKGGETIDKIIAETGVKIDIDEEGNVSIFSSDQAAIDRTKDIIASLVREAKVGEVYHAKVVRIEKFGAFVNLFDKTDALVHISEIAWTRTANVADVLEIGEEVDVKVIKIDDKGRVDASMKALLPRPPKADNPKKES.

Mg(2+)-binding residues include aspartate 489 and aspartate 495. The KH domain occupies 556–615; the sequence is PKIDMIKIDVDKIKVVIGKGGETIDKIIAETGVKIDIDEEGNVSIFSSDQAAIDRTKDII. The S1 motif domain maps to 625-693; sequence GEVYHAKVVR…DKGRVDASMK (69 aa).

Belongs to the polyribonucleotide nucleotidyltransferase family. It depends on Mg(2+) as a cofactor.

It localises to the cytoplasm. The catalysed reaction is RNA(n+1) + phosphate = RNA(n) + a ribonucleoside 5'-diphosphate. Functionally, involved in mRNA degradation. Catalyzes the phosphorolysis of single-stranded polyribonucleotides processively in the 3'- to 5'-direction. In Streptococcus agalactiae serotype Ia (strain ATCC 27591 / A909 / CDC SS700), this protein is Polyribonucleotide nucleotidyltransferase.